The following is a 730-amino-acid chain: MPPTPWAPHSYPPTRRSDHVDVYQSASRGEVPVPDPYQWLEENSNEVDEWTTAQTAFTQGYLDKNADRQKLEEKFRASKDYVKFSAPTLLDSGHWYWFYNSGVQSQAVLYRSKKPVLPDFQRGTRKVGEVYFDPNVLSADGTAIMGTCRFSPSGEYFAYAVSHLGVDYFTIYVRPTSSSLSQAPEAEGGDGRLSDGVKWCKFTTITWTKDSKGFLYQRYPARESLVAKDRDKDAMVCYHRVGTTQLEDIIVQQDKENPDWTYGTDASEDGKYIYLVVYKDASKQNLLWVAEFDKDGVKPEIPWRKVINEFGADYHVITNHGSLIYVKTNVNAPQYKVVTIDLSTGEPEIRDFIPEQKDAKLTQVKCVNKGYFVAIYKRNVKDEIYLYSKAGDQLSRLASDFIGVASITNREKQPHSFLTFSGFNTPGTISRYDFTAPDTQRLSILRTTKLNGLNADDFESTQVWYKSKDGTKVPMFIVRHKSTKFDGTAPAIQNGYGGFAITADPFFSPIMLTFMQTYGAILAVPNIRGGGEFGGEWHKAGRRETKGNTFDDFIAAAQFLVKNKYAAPGKVAITGASNGGFLVCGSVVRAPEGTFGAAVSEGGVADLLKFNKFTGGMAWTSEYGNPFIKEDFDFVQALSPVHNVPKDRVLPATLLMTNAGDDRVVPMHSLKFVANLQYNVPQNPHPLLIRVDKSWLGHGFGKTTDKHTKDAADKWSFVAQSLGLEWKTVD.

Active-site charge relay system residues include serine 577, aspartate 661, and histidine 698.

Belongs to the peptidase S9A family. Monomer. As to expression, expressed in the pileus (cap) and lamellae where it colocalizes with amanitin.

It catalyses the reaction Hydrolysis of Pro-|-Xaa &gt;&gt; Ala-|-Xaa in oligopeptides.. In terms of biological role, dual function macrocyclase-peptidase involved in the biosynthesis of the highly toxic amanitin toxin family of macrocycles. Cleaves peptide bonds on the C-terminal side of prolyl residues. The enzyme first removes 10 residues from the N-terminus of a 35-residue substrate. Conformational trapping of the 25 amino-acid peptide forces the enzyme to release this intermediate rather than proceed to macrocyclization. The enzyme rebinds the 25 amino-acid peptide in a different conformation and catalyzes macrocyclization of the N-terminal eight residues. This chain is Dual function macrocyclase-peptidase POPB, found in Amanita bisporigera (Destroying angel).